The sequence spans 207 residues: Mediator of RNA polymerase II transcription subunit 21 (207 aa).

The tract at residues 37 to 121 (PHPDVPDAAP…PDSPRTFASR (85 aa)) is disordered. The span at 65–80 (PVPAQSQASPPAQNPA) shows a compositional bias: low complexity. Residues 84–96 (AGAGTSVGEGGQT) show a composition bias toward gly residues. The segment covering 97 to 108 (PGPAAGAGADPN) has biased composition (low complexity). A coiled-coil region spans residues 146–196 (IDSSEAEQEKRIRELEGELRRVEEERELKMRELKRLRRTLENVLRAVETGL).

Belongs to the Mediator complex subunit 21 family. As to quaternary structure, component of the Mediator complex.

The protein resides in the nucleus. Functionally, component of the Mediator complex, a coactivator involved in the regulated transcription of nearly all RNA polymerase II-dependent genes. Mediator functions as a bridge to convey information from gene-specific regulatory proteins to the basal RNA polymerase II transcription machinery. Mediator is recruited to promoters by direct interactions with regulatory proteins and serves as a scaffold for the assembly of a functional preinitiation complex with RNA polymerase II and the general transcription factors. The polypeptide is Mediator of RNA polymerase II transcription subunit 21 (srb7) (Neosartorya fischeri (strain ATCC 1020 / DSM 3700 / CBS 544.65 / FGSC A1164 / JCM 1740 / NRRL 181 / WB 181) (Aspergillus fischerianus)).